A 312-amino-acid polypeptide reads, in one-letter code: Holliday junction branch migration complex subunit RuvB (312 aa).

The tract at residues 1 to 168 is large ATPase domain (RuvB-L); the sequence is MKTNNEFRPQ…FGHVFYLSEY (168 aa). ATP contacts are provided by residues Arg-8, Gly-49, Lys-52, Thr-53, Thr-54, 115 to 117, Arg-158, Tyr-168, and Arg-206; that span reads EDF. Residue Thr-53 participates in Mg(2+) binding. The interval 169–234 is small ATPAse domain (RuvB-S); that stretch reads ETSEIAAIIL…NIKNIFEKIQ (66 aa). Residues 237–312 form a head domain (RuvB-H) region; that stretch reads DFGLEEQDIN…EFLKNNQLIK (76 aa). Positions 290 and 295 each coordinate DNA.

Belongs to the RuvB family. As to quaternary structure, homohexamer. Forms an RuvA(8)-RuvB(12)-Holliday junction (HJ) complex. HJ DNA is sandwiched between 2 RuvA tetramers; dsDNA enters through RuvA and exits via RuvB. An RuvB hexamer assembles on each DNA strand where it exits the tetramer. Each RuvB hexamer is contacted by two RuvA subunits (via domain III) on 2 adjacent RuvB subunits; this complex drives branch migration. In the full resolvosome a probable DNA-RuvA(4)-RuvB(12)-RuvC(2) complex forms which resolves the HJ.

The protein resides in the cytoplasm. It catalyses the reaction ATP + H2O = ADP + phosphate + H(+). In terms of biological role, the RuvA-RuvB-RuvC complex processes Holliday junction (HJ) DNA during genetic recombination and DNA repair, while the RuvA-RuvB complex plays an important role in the rescue of blocked DNA replication forks via replication fork reversal (RFR). RuvA specifically binds to HJ cruciform DNA, conferring on it an open structure. The RuvB hexamer acts as an ATP-dependent pump, pulling dsDNA into and through the RuvAB complex. RuvB forms 2 homohexamers on either side of HJ DNA bound by 1 or 2 RuvA tetramers; 4 subunits per hexamer contact DNA at a time. Coordinated motions by a converter formed by DNA-disengaged RuvB subunits stimulates ATP hydrolysis and nucleotide exchange. Immobilization of the converter enables RuvB to convert the ATP-contained energy into a lever motion, pulling 2 nucleotides of DNA out of the RuvA tetramer per ATP hydrolyzed, thus driving DNA branch migration. The RuvB motors rotate together with the DNA substrate, which together with the progressing nucleotide cycle form the mechanistic basis for DNA recombination by continuous HJ branch migration. Branch migration allows RuvC to scan DNA until it finds its consensus sequence, where it cleaves and resolves cruciform DNA. This is Holliday junction branch migration complex subunit RuvB from Ureaplasma urealyticum serovar 10 (strain ATCC 33699 / Western).